Consider the following 1151-residue polypeptide: Cation channel sperm-associated protein subunit gamma 1 (1151 aa).

Residues 1–38 (MVSRPAMSPVSPVWPRKPNLWAFWVLRLVLLLSLKSWA) form the signal peptide. Residues 39–1063 (EDTLQHCTWL…GLPLSSKRSS (1025 aa)) are Extracellular-facing. N-linked (GlcNAc...) asparagine glycosylation is present at Asn-356. Residues 1064–1084 (FIVMVSTSFFIALVVFYILFC) form a helical membrane-spanning segment. Over 1085 to 1151 (LVWPHIVKAW…NVQAKRAKVA (67 aa)) the chain is Cytoplasmic. Positions 1113 to 1123 (SSSSGGFTLHS) are enriched in low complexity. The disordered stretch occupies residues 1113–1151 (SSSSGGFTLHSHSSEGSFEGPSRPGTKEDNVQAKRAKVA).

This sequence belongs to the CATSPERG family.

It localises to the membrane. The chain is Cation channel sperm-associated protein subunit gamma 1 (Catsperg1) from Mus musculus (Mouse).